The primary structure comprises 74 residues: uncharacterized protein (74 aa).

This is an uncharacterized protein from Schizosaccharomyces pombe (strain 972 / ATCC 24843) (Fission yeast).